An 88-amino-acid chain; its full sequence is Putative regulatory protein Npun_R3866 (88 aa).

The protein belongs to the RemA family.

The sequence is that of Putative regulatory protein Npun_R3866 from Nostoc punctiforme (strain ATCC 29133 / PCC 73102).